The chain runs to 371 residues: Protein STRICTOSIDINE SYNTHASE-LIKE 6 (371 aa).

The first 21 residues, Met-1–Ser-21, serve as a signal peptide directing secretion. 2 N-linked (GlcNAc...) asparagine glycosylation sites follow: Asn-101 and Asn-137. Position 303 is a phosphotyrosine (Tyr-303).

It belongs to the strictosidine synthase family.

The protein resides in the vacuole. This is Protein STRICTOSIDINE SYNTHASE-LIKE 6 from Arabidopsis thaliana (Mouse-ear cress).